We begin with the raw amino-acid sequence, 232 residues long: Ribose-5-phosphate isomerase A (232 aa).

Residues 34–37 (TGST), 89–92 (DGAD), and 102–105 (KGGG) each bind substrate. Glu111 functions as the Proton acceptor in the catalytic mechanism. Lys129 contributes to the substrate binding site.

The protein belongs to the ribose 5-phosphate isomerase family. As to quaternary structure, homodimer.

The catalysed reaction is aldehydo-D-ribose 5-phosphate = D-ribulose 5-phosphate. It functions in the pathway carbohydrate degradation; pentose phosphate pathway; D-ribose 5-phosphate from D-ribulose 5-phosphate (non-oxidative stage): step 1/1. Catalyzes the reversible conversion of ribose-5-phosphate to ribulose 5-phosphate. The polypeptide is Ribose-5-phosphate isomerase A (Protochlamydia amoebophila (strain UWE25)).